We begin with the raw amino-acid sequence, 211 residues long: Mitotic spindle assembly checkpoint protein MAD2B (211 aa).

Residues 13–203 (QVVADILCEF…SDILKMQLYV (191 aa)) enclose the HORMA domain.

As to quaternary structure, homooligomer. Interacts with rev1. Interacts with rev3l. Interacts with fzr1 (in complex with the anaphase promoting complex APC). May interact with cdc20.

The protein resides in the nucleus. It is found in the cytoplasm. It localises to the cytoskeleton. The protein localises to the spindle. In terms of biological role, adapter protein able to interact with different proteins and involved in different biological processes. Mediates the interaction between the error-prone DNA polymerase zeta catalytic subunit rev3l and the inserter polymerase rev1, thereby mediating the second polymerase switching in translesion DNA synthesis. Translesion DNA synthesis releases the replication blockade of replicative polymerases, stalled in presence of DNA lesions. May also play a role in signal transduction in response to DNA damage. May regulate the activation of the anaphase promoting complex APC thereby regulating progression through the cell cycle. Through transcriptional regulation may play a role in epithelial-mesenchymal transdifferentiation. The polypeptide is Mitotic spindle assembly checkpoint protein MAD2B (mad2l2) (Xenopus tropicalis (Western clawed frog)).